The following is a 399-amino-acid chain: UDP-N-acetylglucosamine--N-acetylmuramyl-(pentapeptide) pyrophosphoryl-undecaprenol N-acetylglucosamine transferase (399 aa).

Positions 1–21 (MTSRFGHSHHPRRGRSARARA) are enriched in basic residues. The interval 1 to 30 (MTSRFGHSHHPRRGRSARARAGRREGVQSN) is disordered. Residues 58–60 (TGG), Asn170, Arg206, Ser234, Ile288, and Gln333 each bind UDP-N-acetyl-alpha-D-glucosamine.

This sequence belongs to the glycosyltransferase 28 family. MurG subfamily.

The protein localises to the cell inner membrane. The enzyme catalyses di-trans,octa-cis-undecaprenyl diphospho-N-acetyl-alpha-D-muramoyl-L-alanyl-D-glutamyl-meso-2,6-diaminopimeloyl-D-alanyl-D-alanine + UDP-N-acetyl-alpha-D-glucosamine = di-trans,octa-cis-undecaprenyl diphospho-[N-acetyl-alpha-D-glucosaminyl-(1-&gt;4)]-N-acetyl-alpha-D-muramoyl-L-alanyl-D-glutamyl-meso-2,6-diaminopimeloyl-D-alanyl-D-alanine + UDP + H(+). It participates in cell wall biogenesis; peptidoglycan biosynthesis. Functionally, cell wall formation. Catalyzes the transfer of a GlcNAc subunit on undecaprenyl-pyrophosphoryl-MurNAc-pentapeptide (lipid intermediate I) to form undecaprenyl-pyrophosphoryl-MurNAc-(pentapeptide)GlcNAc (lipid intermediate II). This chain is UDP-N-acetylglucosamine--N-acetylmuramyl-(pentapeptide) pyrophosphoryl-undecaprenol N-acetylglucosamine transferase, found in Acidovorax ebreus (strain TPSY) (Diaphorobacter sp. (strain TPSY)).